Reading from the N-terminus, the 71-residue chain is UPF0435 protein RBAM_008100 (71 aa).

Belongs to the UPF0435 family.

The sequence is that of UPF0435 protein RBAM_008100 from Bacillus velezensis (strain DSM 23117 / BGSC 10A6 / LMG 26770 / FZB42) (Bacillus amyloliquefaciens subsp. plantarum).